We begin with the raw amino-acid sequence, 447 residues long: N-succinylarginine dihydrolase (447 aa).

Residues 19–28 (AGLSFGNVAS), Asn-110, and 137–138 (HR) each bind substrate. The active site involves Glu-174. Arg-214 provides a ligand contact to substrate. Residue His-250 is part of the active site. Substrate is bound by residues Asp-252 and Asn-364. Cys-370 acts as the Nucleophile in catalysis.

The protein belongs to the succinylarginine dihydrolase family. Homodimer.

It carries out the reaction N(2)-succinyl-L-arginine + 2 H2O + 2 H(+) = N(2)-succinyl-L-ornithine + 2 NH4(+) + CO2. It functions in the pathway amino-acid degradation; L-arginine degradation via AST pathway; L-glutamate and succinate from L-arginine: step 2/5. In terms of biological role, catalyzes the hydrolysis of N(2)-succinylarginine into N(2)-succinylornithine, ammonia and CO(2). The chain is N-succinylarginine dihydrolase from Idiomarina loihiensis (strain ATCC BAA-735 / DSM 15497 / L2-TR).